Consider the following 352-residue polypeptide: Biotin synthase (352 aa).

A Radical SAM core domain is found at 44-262; it reads NRVQVSTLLS…LAVARLLMPK (219 aa). Positions 59, 63, and 66 each coordinate [4Fe-4S] cluster. Residues Cys-103, Cys-134, Cys-194, and Arg-266 each contribute to the [2Fe-2S] cluster site.

It belongs to the radical SAM superfamily. Biotin synthase family. As to quaternary structure, homodimer. The cofactor is [4Fe-4S] cluster. It depends on [2Fe-2S] cluster as a cofactor.

The catalysed reaction is (4R,5S)-dethiobiotin + (sulfur carrier)-SH + 2 reduced [2Fe-2S]-[ferredoxin] + 2 S-adenosyl-L-methionine = (sulfur carrier)-H + biotin + 2 5'-deoxyadenosine + 2 L-methionine + 2 oxidized [2Fe-2S]-[ferredoxin]. The protein operates within cofactor biosynthesis; biotin biosynthesis; biotin from 7,8-diaminononanoate: step 2/2. Functionally, catalyzes the conversion of dethiobiotin (DTB) to biotin by the insertion of a sulfur atom into dethiobiotin via a radical-based mechanism. This chain is Biotin synthase, found in Pseudomonas putida (strain W619).